We begin with the raw amino-acid sequence, 60 residues long: Large ribosomal subunit protein bL32 (60 aa).

Basic residues predominate over residues 1-20; sequence MAVQKSRKSRSRRDMRRSHH. The segment at 1–22 is disordered; it reads MAVQKSRKSRSRRDMRRSHHRM.

This sequence belongs to the bacterial ribosomal protein bL32 family.

The chain is Large ribosomal subunit protein bL32 from Psychrobacter arcticus (strain DSM 17307 / VKM B-2377 / 273-4).